The sequence spans 638 residues: 1-deoxy-D-xylulose-5-phosphate synthase (638 aa).

Residues His75 and 116–118 (AHS) contribute to the thiamine diphosphate site. Residue Asp147 participates in Mg(2+) binding. Thiamine diphosphate is bound by residues 148–149 (GA), Asn177, Tyr288, and Glu370. Asn177 provides a ligand contact to Mg(2+).

This sequence belongs to the transketolase family. DXPS subfamily. Homodimer. It depends on Mg(2+) as a cofactor. Thiamine diphosphate serves as cofactor.

It carries out the reaction D-glyceraldehyde 3-phosphate + pyruvate + H(+) = 1-deoxy-D-xylulose 5-phosphate + CO2. It participates in metabolic intermediate biosynthesis; 1-deoxy-D-xylulose 5-phosphate biosynthesis; 1-deoxy-D-xylulose 5-phosphate from D-glyceraldehyde 3-phosphate and pyruvate: step 1/1. Catalyzes the acyloin condensation reaction between C atoms 2 and 3 of pyruvate and glyceraldehyde 3-phosphate to yield 1-deoxy-D-xylulose-5-phosphate (DXP). The protein is 1-deoxy-D-xylulose-5-phosphate synthase of Cupriavidus taiwanensis (strain DSM 17343 / BCRC 17206 / CCUG 44338 / CIP 107171 / LMG 19424 / R1) (Ralstonia taiwanensis (strain LMG 19424)).